The sequence spans 234 residues: Peptidase E (234 aa).

Active-site charge relay system residues include S123, D138, and H160.

Belongs to the peptidase S51 family.

The protein localises to the cytoplasm. The enzyme catalyses Dipeptidase E catalyzes the hydrolysis of dipeptides Asp-|-Xaa. It does not act on peptides with N-terminal Glu, Asn or Gln, nor does it cleave isoaspartyl peptides.. Functionally, hydrolyzes dipeptides containing N-terminal aspartate residues. May play a role in allowing the cell to use peptide aspartate to spare carbon otherwise required for the synthesis of the aspartate family of amino acids. The sequence is that of Peptidase E from Actinobacillus pleuropneumoniae serotype 5b (strain L20).